Reading from the N-terminus, the 151-residue chain is Large ribosomal subunit protein bL9 (151 aa).

It belongs to the bacterial ribosomal protein bL9 family.

Functionally, binds to the 23S rRNA. This Prochlorococcus marinus (strain MIT 9515) protein is Large ribosomal subunit protein bL9.